The primary structure comprises 170 residues: Urease accessory protein UreE (170 aa).

It belongs to the UreE family.

Its subcellular location is the cytoplasm. Involved in urease metallocenter assembly. Binds nickel. Probably functions as a nickel donor during metallocenter assembly. This chain is Urease accessory protein UreE, found in Helicobacter pylori (strain HPAG1).